The primary structure comprises 374 residues: DNA replication and repair protein RecF (374 aa).

Residue 30-37 (GPNAQGKT) participates in ATP binding.

Belongs to the RecF family.

It localises to the cytoplasm. The RecF protein is involved in DNA metabolism; it is required for DNA replication and normal SOS inducibility. RecF binds preferentially to single-stranded, linear DNA. It also seems to bind ATP. The polypeptide is DNA replication and repair protein RecF (Lactobacillus gasseri (strain ATCC 33323 / DSM 20243 / BCRC 14619 / CIP 102991 / JCM 1131 / KCTC 3163 / NCIMB 11718 / NCTC 13722 / AM63)).